Here is a 217-residue protein sequence, read N- to C-terminus: Dephospho-CoA kinase (217 aa).

The DPCK domain occupies 2 to 217; that stretch reads VIGLTGGIAS…RELARIEEQK (216 aa). 10 to 15 lines the ATP pocket; that stretch reads ASGKST.

Belongs to the CoaE family.

Its subcellular location is the cytoplasm. It catalyses the reaction 3'-dephospho-CoA + ATP = ADP + CoA + H(+). It functions in the pathway cofactor biosynthesis; coenzyme A biosynthesis; CoA from (R)-pantothenate: step 5/5. Catalyzes the phosphorylation of the 3'-hydroxyl group of dephosphocoenzyme A to form coenzyme A. This is Dephospho-CoA kinase from Lactococcus lactis subsp. lactis (strain IL1403) (Streptococcus lactis).